We begin with the raw amino-acid sequence, 372 residues long: tRNA-specific 2-thiouridylase MnmA (372 aa).

Residues 17-24 and M43 each bind ATP; that span reads GMSGGVDS. The interval 103 to 105 is interaction with target base in tRNA; sequence NPD. The Nucleophile role is filled by C108. A disulfide bridge connects residues C108 and C207. Residue G133 participates in ATP binding. Residues 157-159 form an interaction with tRNA region; the sequence is KDQ. The active-site Cysteine persulfide intermediate is the C207. The interval 319–320 is interaction with tRNA; that stretch reads RY.

The protein belongs to the MnmA/TRMU family.

It is found in the cytoplasm. The enzyme catalyses S-sulfanyl-L-cysteinyl-[protein] + uridine(34) in tRNA + AH2 + ATP = 2-thiouridine(34) in tRNA + L-cysteinyl-[protein] + A + AMP + diphosphate + H(+). Catalyzes the 2-thiolation of uridine at the wobble position (U34) of tRNA, leading to the formation of s(2)U34. This Vibrio cholerae serotype O1 (strain ATCC 39541 / Classical Ogawa 395 / O395) protein is tRNA-specific 2-thiouridylase MnmA.